Consider the following 338-residue polypeptide: Cytoskeleton protein RodZ (338 aa).

Topologically, residues 1–111 (MNTEATHDQN…LGKRRKKRDG (111 aa)) are cytoplasmic. The HTH cro/C1-type domain occupies 19–71 (LRNAREQLGLSQQAVAERLCLKVSTVRDIEEDKAPADLASTFLRGYIRSYARL). The H-T-H motif DNA-binding region spans 30–49 (QQAVAERLCLKVSTVRDIEE). A helical; Signal-anchor for type II membrane protein transmembrane segment spans residues 112-132 (WLMTFTWLVLFVVIGLSGAWW). At 133 to 338 (WQDHKAQQEE…TLNAEQSPAQ (206 aa)) the chain is on the periplasmic side. The span at 155–169 (NANGTNSQSIPLENS) shows a compositional bias: polar residues. The segment at 155-240 (NANGTNSQSI…TTPDTATPLP (86 aa)) is disordered. Low complexity predominate over residues 170-188 (TTTVPEATPAPAAPVDTTA). Polar residues predominate over residues 203–217 (EPQQNAVVPPSQANV). Residues 218–240 (DTATTAPAAPATTTTPDTATPLP) show a composition bias toward low complexity.

Belongs to the RodZ family.

It localises to the cell inner membrane. Functionally, cytoskeletal protein that is involved in cell-shape control through regulation of the length of the long axis. In Escherichia fergusonii (strain ATCC 35469 / DSM 13698 / CCUG 18766 / IAM 14443 / JCM 21226 / LMG 7866 / NBRC 102419 / NCTC 12128 / CDC 0568-73), this protein is Cytoskeleton protein RodZ.